Here is a 1270-residue protein sequence, read N- to C-terminus: Breakpoint cluster region protein (1270 aa).

Met-1 bears the N-acetylmethionine mark. A kinase region spans residues 1-428 (MVDSVGFAEA…DGDSTFQGEA (428 aa)). Residues 28-55 (VGDIEQELERCKASIRRLEQEVNQERFR) adopt a coiled-coil conformation. Residues 67-173 (KKSYDRQRWG…GPAQPGSADA (107 aa)) form a disordered region. Over residues 121–139 (GSPSKGRSASARRPAAAAS) the composition is skewed to low complexity. Ser-122 and Ser-139 each carry phosphoserine. Phosphotyrosine; by HCK is present on Tyr-178. The binding to ABL SH2-domain stretch occupies residues 198–387 (SDRISSLGSQ…QSFDSSSPPT (190 aa)). Disordered regions lie at residues 201-249 (ISSL…DYED), 295-396 (KSPL…RHRQ), and 412-481 (TGQI…SGAL). Ser-203, Ser-216, and Ser-237 each carry phosphoserine. Tyr-247 bears the Phosphotyrosine; by FES mark. Low complexity-rich tracts occupy residues 348–358 (SSGQSSRVSPS) and 371–384 (SPSQ…DSSS). Residues Ser-358, Ser-379, and Ser-384 each carry the phosphoserine modification. Position 387 is a phosphothreonine (Thr-387). A phosphoserine mark is found at Ser-461 and Ser-465. Residue Arg-473 is modified to Omega-N-methylarginine. Phosphoserine is present on residues Ser-475 and Ser-487. A DH domain is found at 497–690 (MRKWVLSGIL…QNFLSSINEE (194 aa)). Residue Tyr-553 is modified to Phosphotyrosine. Position 640 is a phosphothreonine (Thr-640). The residue at position 643 (Tyr-643) is a Phosphotyrosine. At Thr-692 the chain carries Phosphothreonine. The 159-residue stretch at 707 to 865 (QLLKDSFMVE…WRESIREQQK (159 aa)) folds into the PH domain. In terms of domain architecture, C2 spans 892–1019 (HHIPLTINKE…QDRDWQRTVI (128 aa)). A Rho-GAP domain is found at 1053 to 1247 (VKIAVVTKRE…VMSQVQVLLY (195 aa)). At Ser-1263 the chain carries Phosphoserine.

Homotetramer. Interacts with PDZK1. Interacts with HCK, FES/FPS, ABL1, PIK3R1 and GRB2. May interact with CCPG1. Interacts with SH2D5. Interacts with DLG4. Autophosphorylated. Phosphorylated by FES/FPS on tyrosine residues, leading to down-regulation of the BCR kinase activity. Phosphorylation at Tyr-178 by HCK is important for interaction with GRB2. In terms of tissue distribution, expressed in brain. In hippocampal subregions, most abundant in the CA1 region and expressed at successively lower levels in the dentate gyrus and the CA3 region.

The protein resides in the postsynaptic density. It is found in the cell projection. Its subcellular location is the dendritic spine. The protein localises to the axon. It localises to the synapse. It catalyses the reaction L-seryl-[protein] + ATP = O-phospho-L-seryl-[protein] + ADP + H(+). It carries out the reaction L-threonyl-[protein] + ATP = O-phospho-L-threonyl-[protein] + ADP + H(+). In terms of biological role, protein with a unique structure having two opposing regulatory activities toward small GTP-binding proteins. The C-terminus is a GTPase-activating protein (GAP) domain which stimulates GTP hydrolysis by RAC1, RAC2 and CDC42. Accelerates the intrinsic rate of GTP hydrolysis of RAC1 or CDC42, leading to down-regulation of the active GTP-bound form. The central Dbl homology (DH) domain functions as guanine nucleotide exchange factor (GEF) that modulates the GTPases CDC42, RHOA and RAC1. Promotes the conversion of CDC42, RHOA and RAC1 from the GDP-bound to the GTP-bound form. The amino terminus contains an intrinsic kinase activity. Functions as an important negative regulator of neuronal RAC1 activity. Regulates macrophage functions such as CSF1-directed motility and phagocytosis through the modulation of RAC1 activity. Plays a major role as a RHOA GEF in keratinocytes being involved in focal adhesion formation and keratinocyte differentiation. This chain is Breakpoint cluster region protein, found in Mus musculus (Mouse).